Consider the following 208-residue polypeptide: Peptidyl-tRNA hydrolase (208 aa).

TRNA is bound at residue Y19. H24 functions as the Proton acceptor in the catalytic mechanism. TRNA is bound by residues F71, N73, and N119.

This sequence belongs to the PTH family. As to quaternary structure, monomer.

The protein resides in the cytoplasm. It carries out the reaction an N-acyl-L-alpha-aminoacyl-tRNA + H2O = an N-acyl-L-amino acid + a tRNA + H(+). Functionally, hydrolyzes ribosome-free peptidyl-tRNAs (with 1 or more amino acids incorporated), which drop off the ribosome during protein synthesis, or as a result of ribosome stalling. Catalyzes the release of premature peptidyl moieties from peptidyl-tRNA molecules trapped in stalled 50S ribosomal subunits, and thus maintains levels of free tRNAs and 50S ribosomes. The polypeptide is Peptidyl-tRNA hydrolase (Synechococcus elongatus (strain ATCC 33912 / PCC 7942 / FACHB-805) (Anacystis nidulans R2)).